Here is a 329-residue protein sequence, read N- to C-terminus: Phosphate acyltransferase (329 aa).

It belongs to the PlsX family. As to quaternary structure, homodimer. Probably interacts with PlsY.

It is found in the cytoplasm. It catalyses the reaction a fatty acyl-[ACP] + phosphate = an acyl phosphate + holo-[ACP]. It participates in lipid metabolism; phospholipid metabolism. Functionally, catalyzes the reversible formation of acyl-phosphate (acyl-PO(4)) from acyl-[acyl-carrier-protein] (acyl-ACP). This enzyme utilizes acyl-ACP as fatty acyl donor, but not acyl-CoA. The polypeptide is Phosphate acyltransferase (Shouchella clausii (strain KSM-K16) (Alkalihalobacillus clausii)).